The primary structure comprises 201 residues: Large ribosomal subunit protein eL15A (201 aa).

Residues 161-182 (SRGLTSIGKKSRGIGKGHRFNN) are disordered. A compositionally biased stretch (basic residues) spans 169–179 (KKSRGIGKGHR).

The protein belongs to the eukaryotic ribosomal protein eL15 family. As to quaternary structure, component of the large ribosomal subunit (LSU). Mature yeast ribosomes consist of a small (40S) and a large (60S) subunit. The 40S small subunit contains 1 molecule of ribosomal RNA (18S rRNA) and at least 33 different proteins. The large 60S subunit contains 3 rRNA molecules (25S, 5.8S and 5S rRNA) and at least 46 different proteins.

The protein resides in the cytoplasm. It is found in the nucleus. It localises to the nucleolus. Its function is as follows. Component of the ribosome, a large ribonucleoprotein complex responsible for the synthesis of proteins in the cell. The small ribosomal subunit (SSU) binds messenger RNAs (mRNAs) and translates the encoded message by selecting cognate aminoacyl-transfer RNA (tRNA) molecules. The large subunit (LSU) contains the ribosomal catalytic site termed the peptidyl transferase center (PTC), which catalyzes the formation of peptide bonds, thereby polymerizing the amino acids delivered by tRNAs into a polypeptide chain. The nascent polypeptides leave the ribosome through a tunnel in the LSU and interact with protein factors that function in enzymatic processing, targeting, and the membrane insertion of nascent chains at the exit of the ribosomal tunnel. This chain is Large ribosomal subunit protein eL15A (rpl15), found in Schizosaccharomyces pombe (strain 972 / ATCC 24843) (Fission yeast).